The sequence spans 483 residues: Cysteine proteinase 1, mitochondrial (483 aa).

A mitochondrion-targeting transit peptide spans 1–30 (MLPTSVSWSLYLKTFRSHLLRAPQIVLKRM). Active-site residues include cysteine 102, histidine 398, and asparagine 421. A propeptide (removed in mature form; by autocatalysis) is located at residue lysine 483.

Belongs to the peptidase C1 family. In terms of assembly, homohexamer. Binds to nucleic acids. Binds single-stranded DNA and RNA with higher affinity than double-stranded DNA. In terms of processing, the N-terminus of isoform Cytoplasmic is blocked.

It is found in the mitochondrion. Its subcellular location is the cytoplasm. It catalyses the reaction Inactivates bleomycin B2 (a cytotoxic glycometallopeptide) by hydrolysis of a carboxyamide bond of beta-aminoalanine, but also shows general aminopeptidase activity. The specificity varies somewhat with source, but amino acid arylamides of Met, Leu and Ala are preferred.. With respect to regulation, inhibited by E64, a specific inhibitor of cysteine proteases, N-ethylmaleimide, iodacetamide, and mercury and zinc ions. Its function is as follows. The normal physiological role of the enzyme is unknown, but it is not essential for the viability of yeast cells. Has aminopeptidase activity, shortening substrate peptides sequentially by 1 amino acid. Has bleomycin hydrolase activity, which can protect the cell from the toxic effects of bleomycin. Has homocysteine-thiolactonase activity, protecting the cell against homocysteine toxicity. Acts as a repressor in the GAL4 regulatory system, but this does not require either the peptidase or nucleic acid-binding activities. In Saccharomyces cerevisiae (strain YJM789) (Baker's yeast), this protein is Cysteine proteinase 1, mitochondrial (LAP3).